Reading from the N-terminus, the 438-residue chain is MRVEEFLKQKGIEVGDYVRIIKVEDGEKVEYEGIVMPPYELSEGDTVVIKLDNGYNIGIAIEKIQEINVIEKAKAKPEVHFKAELEPRKELPTITILGTGGTIASRIDYETGAVYPAFTAEELAKAVPEIFEIANIKPKLLFNIFSEDMKPKHWIEIAHETAKALNSGNEGVVIAHGTDTMGYTAAALSFMLRNLTKPVVLVGAQRSSDRPSSDAAMNLICATRMAVSDAAEVMVVMHGETSDTYCLAHRGTKVRKMHTSRRDAFRSINDIPIAKIWSDGKIEFLRDDYRKRSEGEVWVDDKLEEKVALVKVYPGMSAELIDFLVDKGYKGIVIEGTGLGHTPSDLIPSIKRAVDEGVAVCMTSQCLYGRVNLNVYATGRKLLKAGVIPCEDMLPETAYVKLMWVLGHTNDLREAKKMMLTNYAGEITPYTKPNTFLI.

An Asparaginase/glutaminase domain is found at 92–422 (PTITILGTGG…REAKKMMLTN (331 aa)). Catalysis depends on residues threonine 102, threonine 178, aspartate 179, and lysine 256.

The protein belongs to the asparaginase 1 family. GatD subfamily. Heterodimer of GatD and GatE.

It carries out the reaction L-glutamyl-tRNA(Gln) + L-glutamine + ATP + H2O = L-glutaminyl-tRNA(Gln) + L-glutamate + ADP + phosphate + H(+). Functionally, allows the formation of correctly charged Gln-tRNA(Gln) through the transamidation of misacylated Glu-tRNA(Gln) in organisms which lack glutaminyl-tRNA synthetase. The reaction takes place in the presence of glutamine and ATP through an activated gamma-phospho-Glu-tRNA(Gln). The GatDE system is specific for glutamate and does not act on aspartate. This is Glutamyl-tRNA(Gln) amidotransferase subunit D from Pyrococcus furiosus (strain ATCC 43587 / DSM 3638 / JCM 8422 / Vc1).